Here is a 628-residue protein sequence, read N- to C-terminus: Serine/threonine-protein phosphatase 2A regulatory subunit psrA (628 aa).

The span at 1–22 shows a compositional bias: polar residues; it reads MKNDHINYQQNLSQSPILNSNK. Disordered regions lie at residues 1–61, 500–558, and 577–628; these read MKND…QIPF, KKKQ…DKPS, and SSHR…YTFT. Composition is skewed to low complexity over residues 23 to 58 and 524 to 547; these read NQTQQNQQQQQQQQQQNPQQQQQFQHQQVPQLSPQQ and QINQNNNNNNNNINNNNNNNNNNN. Over residues 600–618 the composition is skewed to basic and acidic residues; sequence NNHTNHDSEIENEVKEDFR.

The protein belongs to the phosphatase 2A regulatory subunit B56 family. PP2A consists of a trimeric holoenzyme, composed of a 37 kDa catalytic subunit (C subunit) and a 65 kDa constant regulatory subunit (A subunit), that associates with a variety of regulatory subunits (B subunit) such as phr2AB (B55) and psrA (B56 homolog). The trimer may partially dissociates into a core 'AC' dimer equally active compared to the trimer. Seems to play a role in proper anterior patterning (pstO and pstAB).

The protein localises to the cytoplasm. Its subcellular location is the cytosol. In terms of biological role, involved in developmental cell fate decision. The polypeptide is Serine/threonine-protein phosphatase 2A regulatory subunit psrA (psrA) (Dictyostelium discoideum (Social amoeba)).